A 138-amino-acid chain; its full sequence is Large ribosomal subunit protein uL16 (138 aa).

Residues 1–16 show a composition bias toward basic residues; the sequence is MLIPRKVAHRKQHHPG. The interval 1-24 is disordered; it reads MLIPRKVAHRKQHHPGRTGAAKGG.

The protein belongs to the universal ribosomal protein uL16 family. In terms of assembly, part of the 50S ribosomal subunit.

In terms of biological role, binds 23S rRNA and is also seen to make contacts with the A and possibly P site tRNAs. The polypeptide is Large ribosomal subunit protein uL16 (Frankia alni (strain DSM 45986 / CECT 9034 / ACN14a)).